A 367-amino-acid chain; its full sequence is 4-hydroxy-3-methylbut-2-en-1-yl diphosphate synthase (flavodoxin) (367 aa).

[4Fe-4S] cluster contacts are provided by C268, C271, C303, and E310.

Belongs to the IspG family. Requires [4Fe-4S] cluster as cofactor.

It carries out the reaction (2E)-4-hydroxy-3-methylbut-2-enyl diphosphate + oxidized [flavodoxin] + H2O + 2 H(+) = 2-C-methyl-D-erythritol 2,4-cyclic diphosphate + reduced [flavodoxin]. Its pathway is isoprenoid biosynthesis; isopentenyl diphosphate biosynthesis via DXP pathway; isopentenyl diphosphate from 1-deoxy-D-xylulose 5-phosphate: step 5/6. Its function is as follows. Converts 2C-methyl-D-erythritol 2,4-cyclodiphosphate (ME-2,4cPP) into 1-hydroxy-2-methyl-2-(E)-butenyl 4-diphosphate. This Shouchella clausii (strain KSM-K16) (Alkalihalobacillus clausii) protein is 4-hydroxy-3-methylbut-2-en-1-yl diphosphate synthase (flavodoxin).